The chain runs to 546 residues: U3 small nucleolar RNA-associated protein 18 homolog (546 aa).

3 disordered regions span residues 1-55, 94-118, and 177-205; these read MSLS…LEES, SAVR…EENG, and NPGT…DGGV. A compositionally biased stretch (basic and acidic residues) spans 13–23; the sequence is IKREELKKQYE. Acidic residues predominate over residues 24–35; the sequence is DVEDEEEIGSDD. Phosphoserine is present on S33. Positions 45 to 55 are enriched in basic and acidic residues; it reads TEKEKQKLEES. Composition is skewed to acidic residues over residues 101–117 and 193–205; these read DYED…DEEN and ESSD…DGGV. WD repeat units lie at residues 242–281, 372–411, 413–454, and 509–545; these read PSNG…NTKI, KMNG…CLYK, VDEG…GGKR, and STMH…HYQN. The DWD box signature appears at 389 to 404; the sequence is LLSSGGDGQVYVWDLR.

This sequence belongs to the WD repeat UTP18 family.

It localises to the nucleus. Its subcellular location is the nucleolus. Functionally, involved in nucleolar processing of pre-18S ribosomal RNA. This is U3 small nucleolar RNA-associated protein 18 homolog from Arabidopsis thaliana (Mouse-ear cress).